The sequence spans 132 residues: UPF0299 membrane protein YohJ (132 aa).

The next 4 helical transmembrane spans lie at 7–27 (IIWQ…AGIF), 31–51 (LLPV…VLLA), 63–83 (GCYV…VGVM), and 93–113 (FGPV…VVSW).

It belongs to the UPF0299 family.

It is found in the cell inner membrane. The protein is UPF0299 membrane protein YohJ of Shigella boydii serotype 18 (strain CDC 3083-94 / BS512).